The following is a 606-amino-acid chain: MTVVGNPRSWSCRWLPILILLLGTGHGPGVEGVTHYKAGDPVILYVNKVGPYHNPQETYHYYQLPVCCPEKIRHKSLSLGEVLDGDRMAESLYEIRFRENVEKRILCHMQLSSAQVEQLRQAIEELYYFEFVVDDLPIRGFVGYMEESGFLPHSHKIGLWTHLDFHLEFRGDRIIFANVSVRDVKPHSLDGLRPDEFLGLTHAYSVRWSETSVERRSDRRHGDDGGFFPRTLEIHWLSIINSMVLVFLLVGFVAVILMRVLRNDLARYNLDEETTSAGSGDDFDQGDNGWKIIHTDVFRFPPYRGLLCAVLGVGAQFLALGTGIIVMALLGMFNVHRHGAINSAAILLYALTCCISGYVSSHFYRQIGGERWVWNIILTTSLFSVPFFLTWSVVNSVHWANGSTQALPATTILLLLTVWLLVGFPLTVIGGIFGKNNASPFDAPCRTKNIAREIPPQPWYKSTVIHMTVGGFLPFSAISVELYYIFATVWGREQYTLYGILFFVFAILLSVGACISIALTYFQLSGEDYRWWWRSVLSVGSTGLFIFLYSVFYYARRSNMSGAVQTVEFFGYSLLTGYVFFLMLGTISFFSSLKFIRYIYVNLKMD.

The N-terminal stretch at 1–27 (MTVVGNPRSWSCRWLPILILLLGTGHG) is a signal peptide. Asn178 is a glycosylation site (N-linked (GlcNAc...) asparagine). Transmembrane regions (helical) follow at residues 237 to 257 (LSII…AVIL), 310 to 330 (VLGV…MALL), 339 to 359 (GAIN…SGYV), and 373 to 393 (VWNI…TWSV). A glycan (N-linked (GlcNAc...) asparagine) is linked at Asn401. Transmembrane regions (helical) follow at residues 412-432 (ILLL…IGGI), 469-489 (VGGF…FATV), 499-519 (GILF…SIAL), and 535-555 (SVLS…FYYA). N-linked (GlcNAc...) asparagine glycosylation is present at Asn559. The helical transmembrane segment at 570-590 (FGYSLLTGYVFFLMLGTISFF) threads the bilayer.

The protein belongs to the nonaspanin (TM9SF) (TC 9.A.2) family.

The protein localises to the lysosome membrane. It is found in the cytoplasmic vesicle. It localises to the autophagosome membrane. In terms of biological role, plays an essential role in autophagy. In Pongo abelii (Sumatran orangutan), this protein is Transmembrane 9 superfamily member 1 (TM9SF1).